The following is a 97-amino-acid chain: Small ribosomal subunit protein bS18c (97 aa).

It belongs to the bacterial ribosomal protein bS18 family. Part of the 30S ribosomal subunit.

The protein resides in the plastid. It is found in the chloroplast. This is Small ribosomal subunit protein bS18c from Oenothera glazioviana (Large-flowered evening primrose).